Here is an 88-residue protein sequence, read N- to C-terminus: UPF0297 protein SAK_2030 (88 aa).

It belongs to the UPF0297 family.

The sequence is that of UPF0297 protein SAK_2030 from Streptococcus agalactiae serotype Ia (strain ATCC 27591 / A909 / CDC SS700).